The following is a 424-amino-acid chain: Hemagglutinin-esterase (424 aa).

An N-terminal signal peptide occupies residues 1 to 16 (MFLLPRFVLVSCIIGS). Residues 7–127 (FVLVSCIIGS…SNDIWMQNKG (121 aa)) are esterase domain 1. Topologically, residues 17-392 (LGFDNPPTNV…PICVYDPLPL (376 aa)) are virion surface. The active-site Nucleophile is the serine 40. Cysteine 44 and cysteine 65 are joined by a disulfide. Residues asparagine 54, asparagine 89, asparagine 153, asparagine 236, and asparagine 301 are each glycosylated (N-linked (GlcNAc...) asparagine; by host). 3 disulfides stabilise this stretch: cysteine 113/cysteine 162, cysteine 197/cysteine 276, and cysteine 205/cysteine 249. Residues 128 to 266 (LFYTQVYKNM…GNYLAISNEL (139 aa)) form a receptor binding region. An esterase domain 2 region spans residues 267-379 (LLTVPTKAIC…RCPTAADINN (113 aa)). Cysteine 307 and cysteine 312 are disulfide-bonded. Residue asparagine 316 is glycosylated (N-linked (GlcNAc...) asparagine; by host). Catalysis depends on charge relay system residues aspartate 326 and histidine 329. An intrachain disulfide couples cysteine 347 to cysteine 371. Asparagine 358 carries N-linked (GlcNAc...) asparagine; by host glycosylation. A helical transmembrane segment spans residues 393–413 (ILLGILLGVAVIIIVVLLLYF). The Intravirion segment spans residues 414 to 424 (MVDNGTRLHDA). A glycan (N-linked (GlcNAc...) asparagine; by host) is linked at asparagine 417.

Belongs to the influenza type C/coronaviruses hemagglutinin-esterase family. In terms of assembly, homodimer; disulfide-linked. Forms a complex with the M protein in the pre-Golgi. Associates then with S-M complex to form a ternary complex S-M-HE. In terms of processing, N-glycosylated in the host RER.

It localises to the virion membrane. The protein localises to the host cell membrane. The enzyme catalyses N-acetyl-9-O-acetylneuraminate + H2O = N-acetylneuraminate + acetate + H(+). It carries out the reaction N-acetyl-4-O-acetylneuraminate + H2O = N-acetylneuraminate + acetate + H(+). In terms of biological role, structural protein that makes short spikes at the surface of the virus. Contains receptor binding and receptor-destroying activities. Mediates de-O-acetylation of N-acetyl-4-O-acetylneuraminic acid, which is probably the receptor determinant recognized by the virus on the surface of erythrocytes and susceptible cells. This receptor-destroying activity is important for virus release as it probably helps preventing self-aggregation and ensures the efficient spread of the progeny virus from cell to cell. May serve as a secondary viral attachment protein for initiating infection, the spike protein being the major one. May become a target for both the humoral and the cellular branches of the immune system. The protein is Hemagglutinin-esterase of Bovine coronavirus (strain LY-138) (BCoV).